Reading from the N-terminus, the 807-residue chain is AP-5 complex subunit zeta-1 (807 aa).

As to quaternary structure, probably part of the adaptor protein complex 5 (AP-5) a tetramer composed of AP5B1, AP5M1, AP5S1 and AP5Z1. Interacts with ZFYVE26 and SPG11.

Its subcellular location is the cytoplasm. It localises to the nucleus. As part of AP-5, a probable fifth adaptor protein complex it may be involved in endosomal transport. The sequence is that of AP-5 complex subunit zeta-1 (Ap5z1) from Mus musculus (Mouse).